The primary structure comprises 911 residues: SH3 and PX domain-containing protein 2B (911 aa).

Residues 5–129 (RSIVEVKVLD…QFFETRPEDL (125 aa)) enclose the PX domain. Residue Y25 is modified to Phosphotyrosine. SH3 domains lie at 152–211 (MVLE…GQDG) and 221–280 (EEEE…KNSG). Positions 275–366 (LKKNSGEPLP…GLNLPKPPIP (92 aa)) are disordered. S279 and S291 each carry phosphoserine. Residues 282–292 (PLPPKPGPGSP) are compositionally biased toward pro residues. The span at 311-337 (GREKELLSSQRDGRFEGRPVPDGDAKQ) shows a compositional bias: basic and acidic residues. A compositionally biased stretch (basic residues) spans 338-347 (RSPKMRQRPP). In terms of domain architecture, SH3 3 spans 368–427 (QVEEEYYTIAEFQTTIPDGISFQAGLKVEVIEKNLSGWWYIQIEDKEGWAPATFIDKYKK). The segment at 458-834 (NTGSEATGPS…GPWGTGKIGE (377 aa)) is disordered. Composition is skewed to basic and acidic residues over residues 486–499 (KDWK…RKAS), 517–548 (EEKP…RTEQ), 571–586 (PARD…DKSR), 598–609 (CGHKVLAKEVKK), and 618–628 (SKTDLPEEKPD). Phosphoserine occurs at positions 499 and 528. Pro residues-rich tracts occupy residues 643–653 (RPKPAPSPKTE) and 756–766 (VVPPRRPPPPK). The span at 822–831 (GSLGPWGTGK) shows a compositional bias: gly residues. S843 is modified (phosphoserine). The 62-residue stretch at 850–911 (LKDSLYVAVA…IPSNYLRKKP (62 aa)) folds into the SH3 4 domain.

Belongs to the SH3PXD2 family. Interacts with ADAM15. Interacts with NOXO1. Interacts (via SH3 domains) with NOXA1; the interaction is direct. Interacts with FASLG. Post-translationally, phosphorylated in SRC-transformed cells. Expressed in fibroblasts.

The protein resides in the cytoplasm. Its subcellular location is the cell projection. The protein localises to the podosome. Adapter protein involved in invadopodia and podosome formation and extracellular matrix degradation. Binds matrix metalloproteinases (ADAMs), NADPH oxidases (NOXs) and phosphoinositides. Acts as an organizer protein that allows NOX1- or NOX3-dependent reactive oxygen species (ROS) generation and ROS localization. Plays a role in mitotic clonal expansion during the immediate early stage of adipocyte differentiation. This Homo sapiens (Human) protein is SH3 and PX domain-containing protein 2B (SH3PXD2B).